Reading from the N-terminus, the 284-residue chain is MTVETKDLPESNYLLDYDDTEKRRLREQHDLIKAYTGKLILAPLDLTKPNLKILDSGTFDGHWLTEAAKPLTTPLLTGTDISPAAFPNPPPQNTSFHIQSITDPWPASWQNTFDLVHQRLVLAGTTPTGGLDAVRNLAGLAKPGGWVQLIEGKLLAESQRTRFPALHRFHSFIERMLPGFGWNIRAGLMVGGWLGEVGLEEVGEMEVEIPVGRANGDGRLGAMAEKNLRDVMGVWRQASSKLPADSPFKASELEEIFVDWDKEIETIGSLLRFAVVWGRRPALD.

The protein belongs to the methyltransferase superfamily. LaeA methyltransferase family.

The protein operates within mycotoxin biosynthesis. Functionally, N-methyltransferase; part of the gene cluster that mediates the biosynthesis of sirodesmin PL, an epipolythiodioxopiperazine (ETP) characterized by a disulfide bridged cyclic dipeptide and that acts as a phytotoxin which is involved in the blackleg didease of canola. SirD catalyzes the O-prenylation of L-tyrosine (L-Tyr) in the presence of dimethylallyl diphosphate (DMAPP) to yield 4-O-dimethylallyl-L-Tyr, and therefore represents probably the first pathway-specific enzyme in the biosynthesis of sirodesmin PL. 4-O-dimethylallyl-L-Tyr, then undergoes condensation with L-Ser in a reaction catalyzed by the non-ribosomal peptide synthase sirP to form the diketopiperazine (DKP) backbone. Further bishydroxylation of the DKP performed by the cytochrome P450 monooxygenase sirC leads to the production of the intermediate phomamide. This step is essential to form the reactive thiol group required for toxicity of sirodesmin PL. The next steps of sirodesmin biosynthesis are not well understood yet but some predictions could be made from intermediate compounds identification. Phomamide is converted into phomalizarine via oxidation, probably by sirT. Further oxidation, methylation (by sirM or sirN) and reduction steps convert phomalizarine to deacetyl sirodesmin. Finally, acetyltransferase sirH probably acetylates deacetyl sirodesmin to produce sirodesmin PL. This is N-methyltransferase sirN from Leptosphaeria maculans (Blackleg fungus).